Here is a 400-residue protein sequence, read N- to C-terminus: Elongation factor Tu (400 aa).

The 199-residue stretch at 10-208 (KPHVNVGTIG…AMDNYIPEPQ (199 aa)) folds into the tr-type G domain. Residues 19 to 26 (GHIDHGKS) form a G1 region. Residue 19–26 (GHIDHGKS) participates in GTP binding. Position 26 (Ser-26) interacts with Mg(2+). A G2 region spans residues 60–64 (GITIN). Residues 81 to 84 (DCPG) are G3. GTP contacts are provided by residues 81–85 (DCPGH) and 136–139 (NKTD). The tract at residues 136-139 (NKTD) is G4. The tract at residues 174–176 (SAL) is G5.

Belongs to the TRAFAC class translation factor GTPase superfamily. Classic translation factor GTPase family. EF-Tu/EF-1A subfamily. As to quaternary structure, monomer.

The protein resides in the cytoplasm. It catalyses the reaction GTP + H2O = GDP + phosphate + H(+). GTP hydrolase that promotes the GTP-dependent binding of aminoacyl-tRNA to the A-site of ribosomes during protein biosynthesis. This Thermotoga petrophila (strain ATCC BAA-488 / DSM 13995 / JCM 10881 / RKU-1) protein is Elongation factor Tu.